We begin with the raw amino-acid sequence, 476 residues long: Nyctalopin (476 aa).

The signal sequence occupies residues 1 to 18; that stretch reads MLILLLHAVVFSLPYTRA. The LRRNT domain occupies 19 to 57; that stretch reads TEACLRACPAACTCSHVERGCSVRCDRAGLQRVPQEFPC. 11 LRR repeats span residues 58–79, 82–103, 106–128, 131–154, 155–177, 178–199, 202–223, 226–247, 250–271, 274–295, and 298–319; these read EAASIDLDRNGLRILGERAFGT, SLRRLSLRHNNLSFITPGAFKG, RLAELRLAHNGELRYLHVRTFAA, RLRRLDLAACRLFSVPERLLAELP, ALRELTAFDNLFRRVPGALRGLA, NLTHAHFERSRIEAVASGSLLG, RLRSLSLQANRVRAVHAGAFGD, ALEDLLLNDNLLATLPAAAFRG, RLRTLNLGGNALGSVARAWFSD, ELELLYLDRNSITFVEEGAFQN, and GLLALHLNGNRLTVLSWAAFQP. A glycan (N-linked (GlcNAc...) asparagine) is linked at N92. N178 carries N-linked (GlcNAc...) asparagine glycosylation. The N-linked (GlcNAc...) asparagine glycan is linked to N295. Positions 331–383 constitute an LRRCT domain; sequence NPWRCDCQLEWLRDWMEGSGRVADVACASPGSVAGQDLSQVVFERSSDGLCVD. Residues N388, N427, N434, and N438 are each glycosylated (N-linked (GlcNAc...) asparagine).

Belongs to the small leucine-rich proteoglycan (SLRP) family. SLRP class IV subfamily. Expressed abundantly in retina with lower levels in brain, lung, spleen and testis. Not detected in kidney, heart or liver. In the retina, highest expression found in the inner nuclear layer and ganglion cell layer.

Its subcellular location is the secreted. It is found in the extracellular space. The protein localises to the extracellular matrix. The polypeptide is Nyctalopin (Nyx) (Mus musculus (Mouse)).